A 132-amino-acid polypeptide reads, in one-letter code: Large-conductance mechanosensitive channel (132 aa).

A run of 2 helical transmembrane segments spans residues 11 to 31 (FISRGNALDLAVGVVIGGAFG) and 75 to 95 (GSFLQAVFDFVIIAFAIFLLV).

It belongs to the MscL family. In terms of assembly, homopentamer.

It localises to the cell inner membrane. Channel that opens in response to stretch forces in the membrane lipid bilayer. May participate in the regulation of osmotic pressure changes within the cell. The sequence is that of Large-conductance mechanosensitive channel from Synechococcus sp. (strain JA-3-3Ab) (Cyanobacteria bacterium Yellowstone A-Prime).